The following is a 334-amino-acid chain: GTP 3',8-cyclase (334 aa).

A Radical SAM core domain is found at 11 to 236 (GFNRKIDYLR…ESTESSQGPA (226 aa)). A GTP-binding site is contributed by Arg-20. The [4Fe-4S] cluster site is built by Cys-27 and Cys-31. S-adenosyl-L-methionine is bound at residue Tyr-33. [4Fe-4S] cluster is bound at residue Cys-34. Arg-69 lines the GTP pocket. Gly-73 is an S-adenosyl-L-methionine binding site. Thr-100 is a GTP binding site. Residue Ser-124 participates in S-adenosyl-L-methionine binding. Lys-161 lines the GTP pocket. An S-adenosyl-L-methionine-binding site is contributed by Met-195. 2 residues coordinate [4Fe-4S] cluster: Cys-260 and Cys-263. Residue 265 to 267 (RVR) participates in GTP binding. Cys-277 is a [4Fe-4S] cluster binding site.

The protein belongs to the radical SAM superfamily. MoaA family. In terms of assembly, monomer and homodimer. [4Fe-4S] cluster serves as cofactor.

The enzyme catalyses GTP + AH2 + S-adenosyl-L-methionine = (8S)-3',8-cyclo-7,8-dihydroguanosine 5'-triphosphate + 5'-deoxyadenosine + L-methionine + A + H(+). It functions in the pathway cofactor biosynthesis; molybdopterin biosynthesis. Its function is as follows. Catalyzes the cyclization of GTP to (8S)-3',8-cyclo-7,8-dihydroguanosine 5'-triphosphate. The protein is GTP 3',8-cyclase of Pseudomonas putida (strain W619).